The sequence spans 211 residues: Potassium-transporting ATPase KdpC subunit (211 aa).

Residues 13 to 35 (VVTMVLTGLLYPLAVTGLAQLLF) form a helical membrane-spanning segment.

This sequence belongs to the KdpC family. In terms of assembly, the system is composed of three essential subunits: KdpA, KdpB and KdpC.

It is found in the cell membrane. In terms of biological role, part of the high-affinity ATP-driven potassium transport (or Kdp) system, which catalyzes the hydrolysis of ATP coupled with the electrogenic transport of potassium into the cytoplasm. This subunit acts as a catalytic chaperone that increases the ATP-binding affinity of the ATP-hydrolyzing subunit KdpB by the formation of a transient KdpB/KdpC/ATP ternary complex. In Myxococcus xanthus, this protein is Potassium-transporting ATPase KdpC subunit.